Consider the following 254-residue polypeptide: Flagellar L-ring protein 1 (254 aa).

An N-terminal signal peptide occupies residues 1-26; sequence MSPFSSAFRPRRIAISALLLAIGALA.

The protein belongs to the FlgH family. The basal body constitutes a major portion of the flagellar organelle and consists of four rings (L,P,S, and M) mounted on a central rod.

The protein localises to the cell outer membrane. The protein resides in the bacterial flagellum basal body. Assembles around the rod to form the L-ring and probably protects the motor/basal body from shearing forces during rotation. This Bradyrhizobium diazoefficiens (strain JCM 10833 / BCRC 13528 / IAM 13628 / NBRC 14792 / USDA 110) protein is Flagellar L-ring protein 1 (flgH1).